A 343-amino-acid polypeptide reads, in one-letter code: Coiled-coil domain-containing protein 97 (343 aa).

Position 1 is an N-acetylmethionine (Met-1). The tract at residues 1–37 (MEAVATATAAKEPDKGCIEPGPGHWGELSRTPVPSKP) is disordered. Residue Thr-47 is modified to Phosphothreonine. Disordered stretches follow at residues 200–220 (ARTP…ACPL), 234–277 (QQRL…DSEE), and 292–343 (RFLD…LDGD). The stretch at 224–262 (LLQSYEERELQQRLLQQQEEEEACLEEEEEEEDSDEEDQ) forms a coiled coil. Acidic residues predominate over residues 241 to 261 (QEEEEACLEEEEEEEDSDEED). A compositionally biased stretch (basic and acidic residues) spans 262 to 277 (QRSGKDSEAWVPDSEE). Ser-275 and Ser-337 each carry phosphoserine. Acidic residues predominate over residues 324–343 (ERYFDEEEPEDAPSPELDGD).

Associates with splicing factor SF3B complex, involved in branch-site recognition.

The protein localises to the nucleus. May play a role pre-mRNA splicing through the association with the splicing factor SF3B complex which is involved in branch-site recognition. The polypeptide is Coiled-coil domain-containing protein 97 (CCDC97) (Homo sapiens (Human)).